Consider the following 162-residue polypeptide: MALNLQDKKAIVAEVNEAASGALSAVVADSRGVQVAAMTNLRKQAREAGVYLKVVRNTLARRAVEGTAYECLKDVFVGPTLIGFSNEHPGAAARLFKDFAKENKAFEIKAAAFEGVLTDPEVLATLPTYDEAIARLMMCMKEASAGKLVRTIAAVRDQKEAA.

It belongs to the universal ribosomal protein uL10 family. Part of the ribosomal stalk of the 50S ribosomal subunit. The N-terminus interacts with L11 and the large rRNA to form the base of the stalk. The C-terminus forms an elongated spine to which L12 dimers bind in a sequential fashion forming a multimeric L10(L12)X complex.

Its function is as follows. Forms part of the ribosomal stalk, playing a central role in the interaction of the ribosome with GTP-bound translation factors. In Vibrio cholerae serotype O1 (strain ATCC 39541 / Classical Ogawa 395 / O395), this protein is Large ribosomal subunit protein uL10.